A 1585-amino-acid chain; its full sequence is Histone acetyltransferase lsy-12 (1585 aa).

2 disordered regions span residues 1–37 (MGKK…ARRE) and 279–491 (GPQH…DDPV). A compositionally biased stretch (basic and acidic residues) spans 23–37 (PKDRTARPTAAARRE). A compositionally biased stretch (polar residues) spans 279 to 296 (GPQHENVTVSENVLSTES). Positions 302–312 (TETKRLHDSSR) are enriched in basic and acidic residues. Composition is skewed to polar residues over residues 355-364 (LLSNPHSTPV) and 411-426 (SRLS…SNDL). The span at 431 to 440 (SAPSSSSAAS) shows a compositional bias: low complexity. The span at 453–469 (QQRRKGNQSAARSRKIK) shows a compositional bias: basic residues. Acidic residues predominate over residues 477-491 (QEDEPMELDSDDDPV). The region spanning 544-830 (EQARLPERIH…YDPECLDWVP (287 aa)) is the MYST-type HAT domain. A C2HC MYST-type zinc finger spans residues 577-602 (LFICEFCFFYARSDEIMQNHAKKCML). Position 644 is an N6-acetyllysine; by autocatalysis (Lys-644). 685–689 (SCIMT) contacts acetyl-CoA. Glu-720 serves as the catalytic Proton donor/acceptor. Ser-724 and Lys-815 together coordinate acetyl-CoA. Basic and acidic residues-rich tracts occupy residues 844 to 855 (SKEEIEQDEQRR) and 947 to 956 (VLDKSNIREE). Disordered regions lie at residues 844–903 (SKEE…LKHE), 927–1262 (EENK…IGKS), 1286–1373 (ESTA…ASNH), and 1431–1507 (HHQF…VHPQ). The segment covering 977–999 (NKCNNTESEPNPSGRKTSATSSG) has biased composition (polar residues). Residues 1011–1022 (TEEEEEDDDPTD) show a composition bias toward acidic residues. Residues 1029-1046 (DDEKPFETSVNKEKNEKS) are compositionally biased toward basic and acidic residues. The span at 1047-1060 (RRGKKVSKKRRSVA) shows a compositional bias: basic residues. 2 stretches are compositionally biased toward basic and acidic residues: residues 1070–1081 (VRDRDEPKKAEN) and 1135–1151 (DIPK…AYDR). The span at 1164–1173 (PTPDSYHSSP) shows a compositional bias: low complexity. Over residues 1185–1194 (LMQAQQNIYQ) the composition is skewed to polar residues. The span at 1196–1207 (NDCHFAENDSKP) shows a compositional bias: basic and acidic residues. Composition is skewed to polar residues over residues 1298–1317 (AGPS…NTTP) and 1324–1333 (HPNSQQQATP). The segment covering 1482–1493 (QHQQQQPQQPQQ) has biased composition (low complexity).

Belongs to the MYST (SAS/MOZ) family.

It catalyses the reaction L-lysyl-[protein] + acetyl-CoA = N(6)-acetyl-L-lysyl-[protein] + CoA + H(+). In terms of biological role, probable histone acetyltransferase. Required to initiate and then maintain lateralized gene expression in the ASE sensory neurons. Involved in determining cell fate in the ASE neurons. In Caenorhabditis elegans, this protein is Histone acetyltransferase lsy-12.